The chain runs to 318 residues: Potassium channel subfamily K member 15 (318 aa).

The Cytoplasmic portion of the chain corresponds to 1–8 (MRKQSART). The chain crosses the membrane as a helical span at residues 9–29 (AALILCILSYLLVGAAVFDAL). The pore-forming intramembrane region spans 80 to 101 (FAGSFYFAITVITTIGYGHAAP). A helical membrane pass occupies residues 108-128 (VFCMFYALLGIPLTLVTFQSL). Residues 129–158 (GERLNALVRCLLLAAKRCLGLRRPHVSAEN) lie on the Cytoplasmic side of the membrane. The helical transmembrane segment at 159–179 (MVVAGLLLCAATLALGAAAFA) threads the bilayer. Residues 189–209 (AYYYCFITLTTIGFGDFVALQ) constitute an intramembrane region (pore-forming). Residues 223–243 (FSFLYILLGLTVIGAFLNLVV) form a helical membrane-spanning segment. The Cytoplasmic portion of the chain corresponds to 244–318 (LRFLASAEAP…DRLRARRKSI (75 aa)). Residues 296-318 (LSPEAVHDCHSSPDRLRARRKSI) form a disordered region. Residues 300-311 (AVHDCHSSPDRL) are compositionally biased toward basic and acidic residues.

This sequence belongs to the two pore domain potassium channel (TC 1.A.1.8) family. As to quaternary structure, heterodimer. In terms of processing, phosphorylated. As to expression, brain-specific. Highly expressed in auditory nuclei, in Purkinje cells and in olfactory bulb mitral cells.

It localises to the membrane. Its function is as follows. Probable potassium channel subunit. No channel activity observed in heterologous systems. May need to associate with another protein to form a functional channel. This chain is Potassium channel subfamily K member 15 (Kcnk15), found in Rattus norvegicus (Rat).